We begin with the raw amino-acid sequence, 186 residues long: uncharacterized protein (186 aa).

This is an uncharacterized protein from Haemophilus influenzae (strain ATCC 51907 / DSM 11121 / KW20 / Rd).